A 394-amino-acid chain; its full sequence is 1-deoxy-D-xylulose 5-phosphate reductoisomerase (394 aa).

The NADPH site is built by Thr-10, Gly-11, Ser-12, Ile-13, Gly-38, Arg-39, Asn-40, and Asn-123. Lys-124 provides a ligand contact to 1-deoxy-D-xylulose 5-phosphate. Residue Glu-125 participates in NADPH binding. Mn(2+) is bound at residue Asp-149. Residues Ser-150, Glu-151, Ser-175, and His-198 each contribute to the 1-deoxy-D-xylulose 5-phosphate site. Glu-151 is a binding site for Mn(2+). Residue Gly-204 participates in NADPH binding. Ser-211, Asn-216, Lys-217, and Glu-220 together coordinate 1-deoxy-D-xylulose 5-phosphate. Position 220 (Glu-220) interacts with Mn(2+).

It belongs to the DXR family. Mg(2+) is required as a cofactor. It depends on Mn(2+) as a cofactor.

The catalysed reaction is 2-C-methyl-D-erythritol 4-phosphate + NADP(+) = 1-deoxy-D-xylulose 5-phosphate + NADPH + H(+). The protein operates within isoprenoid biosynthesis; isopentenyl diphosphate biosynthesis via DXP pathway; isopentenyl diphosphate from 1-deoxy-D-xylulose 5-phosphate: step 1/6. Functionally, catalyzes the NADPH-dependent rearrangement and reduction of 1-deoxy-D-xylulose-5-phosphate (DXP) to 2-C-methyl-D-erythritol 4-phosphate (MEP). This Cereibacter sphaeroides (strain ATCC 17025 / ATH 2.4.3) (Rhodobacter sphaeroides) protein is 1-deoxy-D-xylulose 5-phosphate reductoisomerase.